We begin with the raw amino-acid sequence, 718 residues long: 1-deoxy-D-xylulose-5-phosphate synthase 1, chloroplastic (718 aa).

Residues 1 to 55 (MAFCALSFPAHISRATTPAPSDLQKSSSFSSRFYWGADLLRPSQYKVRKIQSGVY) constitute a chloroplast transit peptide. Thiamine diphosphate contacts are provided by residues His-143 and 184 to 186 (GHS). A Mg(2+)-binding site is contributed by Asp-215. Residues 216-217 (GA), Asn-244, Tyr-365, and Glu-447 contribute to the thiamine diphosphate site. Asn-244 contacts Mg(2+).

This sequence belongs to the transketolase family. DXPS subfamily. Homodimer. The cofactor is Mg(2+). Requires thiamine diphosphate as cofactor. As to expression, expressed in trichomes, leaves, flowers, roots and stems.

Its subcellular location is the plastid. The protein localises to the chloroplast. It carries out the reaction D-glyceraldehyde 3-phosphate + pyruvate + H(+) = 1-deoxy-D-xylulose 5-phosphate + CO2. It functions in the pathway metabolic intermediate biosynthesis; 1-deoxy-D-xylulose 5-phosphate biosynthesis; 1-deoxy-D-xylulose 5-phosphate from D-glyceraldehyde 3-phosphate and pyruvate: step 1/1. Catalyzes the acyloin condensation reaction between C atoms 2 and 3 of pyruvate and glyceraldehyde 3-phosphate to yield 1-deoxy-D-xylulose-5-phosphate (DXP). The chain is 1-deoxy-D-xylulose-5-phosphate synthase 1, chloroplastic from Cannabis sativa (Hemp).